Reading from the N-terminus, the 529-residue chain is Cytochrome P450 monooxygenase oblE (529 aa).

A helical membrane pass occupies residues 38-58 (WQYIVTLLIAIITYDQVMYIW). Cys477 is a heme binding site.

The protein belongs to the cytochrome P450 family. Heme is required as a cofactor.

It localises to the membrane. It participates in secondary metabolite biosynthesis; terpenoid biosynthesis. Cytochrome P450 monooxygenase; part of the gene cluster that mediates the biosynthesis of the sesterterpenes ophiobolins, fungal phytotoxins with potential anti-cancer activities. The first step of the pathway is performed by the sesterterpene synthase oblA that possesses both prenyl transferase and terpene cyclase activity, converting isopentenyl diphosphate and dimethylallyl diphosphate into geranylfarnesyl diphosphate (GFPP) and further converting GFPP into ophiobolin F, respectively. Other sesterterpenoids (C(25) terpenoids) are found as minor products of oblA. The cytochrome P450 monooxygenase oblB then catalyzes a four-step oxidative transformation of ophiobolin F to yield ophiobolin C. The function of the cytochrome P450 monooxygenase oblE has still to be determined. The protein is Cytochrome P450 monooxygenase oblE of Emericella variicolor (Aspergillus stellatus).